Here is a 170-residue protein sequence, read N- to C-terminus: Adenine phosphoribosyltransferase (170 aa).

This sequence belongs to the purine/pyrimidine phosphoribosyltransferase family. As to quaternary structure, homodimer.

The protein resides in the cytoplasm. It catalyses the reaction AMP + diphosphate = 5-phospho-alpha-D-ribose 1-diphosphate + adenine. It functions in the pathway purine metabolism; AMP biosynthesis via salvage pathway; AMP from adenine: step 1/1. Functionally, catalyzes a salvage reaction resulting in the formation of AMP, that is energically less costly than de novo synthesis. The protein is Adenine phosphoribosyltransferase of Pseudothermotoga lettingae (strain ATCC BAA-301 / DSM 14385 / NBRC 107922 / TMO) (Thermotoga lettingae).